We begin with the raw amino-acid sequence, 637 residues long: Transcription factor PHYTOCHROME INTERACTING FACTOR-LIKE 15 (637 aa).

The span at 35 to 46 (FFGGTGGGGGGS) shows a compositional bias: gly residues. 3 disordered regions span residues 35–54 (FFGGTGGGGGGSSSRAQERQ), 146–213 (ASLP…EGVM), and 356–397 (ECSA…RRRR). Residues 149-170 (PASNHNGATNNRNAPVATTTTR) show a composition bias toward polar residues. A basic motif region spans residues 384–397 (RTAEVHNLSERRRR). The span at 384–397 (RTAEVHNLSERRRR) shows a compositional bias: basic and acidic residues. Positions 384–433 (RTAEVHNLSERRRRDRINEKMRALQELIPNCNKIDKASMLDEAIEYLKTL) constitute a bHLH domain. Residues 398-433 (DRINEKMRALQELIPNCNKIDKASMLDEAIEYLKTL) are helix-loop-helix motif. Residues 601-637 (GDNENFRIPSSAQTKSSQFSDGTGKGTNARERDGAET) are disordered. Residues 608–621 (IPSSAQTKSSQFSD) show a composition bias toward polar residues. Residues 628-637 (NARERDGAET) show a composition bias toward basic and acidic residues.

Belongs to the bHLH protein family. As to quaternary structure, interacts with LF and PRR1.

It is found in the nucleus. Its function is as follows. Transcription factor that may act as negative regulator of phyB-dependent light signal transduction. The polypeptide is Transcription factor PHYTOCHROME INTERACTING FACTOR-LIKE 15 (Oryza sativa subsp. japonica (Rice)).